Here is a 550-residue protein sequence, read N- to C-terminus: MALKARALYSFQGENKEEINLMENEELQLLSDVSLDGWLQGTNSRGQTGLFPASYVEIQSSRSGSVQVDYSGNAREYTDPPHQGSYDDDDEEDDDDWDDWDDGQTVVDEPSGSNGVSRSELQHHHHYSRPEYSHRPRPALERQDSIASGKRGSVVGRNLNRFSSFVRSGVEAFVLGDVPQFGGVAESHAIEMAPKGPQWKANPRPFNCSVEEPTKQTKFKGIKSYISYRLTPDHSNSPVYRRYKHFDWLYNRLLHKFTVISLPHLPEKQATGRFEEDFIQKRKRRLVLWMDHMTSHPVLSQYDGFQHFLGCQDEKQWKAGKRRAERDELVGASFLLTLQLPTEHQDLQDVEERVDVFKAFSKKMDESVLQLSSVVSELARKHLGGFRKEFQKLGAAFQGLSHSFQLDPPYSSEPLVGAISHTGRTYEAVGEMFAEQPKNDQFRFLDTLSLYQGLLSNFPDIIHLQKGAFAKVKDSQRMSDEGRMEQDEADGVRKRCRVVGFALQAEINHFHQRRLLDFKQAIQHYLKEQIIFYRRVSQELEKTLHLYDEL.

The SH3 domain maps to methionine 1–serine 61. Positions arginine 62 to glycine 152 are disordered. The span at tyrosine 86 to aspartate 102 shows a compositional bias: acidic residues. Residues serine 128–aspartate 144 are compositionally biased toward basic and acidic residues. The PX domain maps to phenylalanine 206 to glutamine 316. The BAR domain occupies leucine 347–leucine 550.

It belongs to the sorting nexin family.

The protein resides in the cytoplasm. The protein localises to the cytosol. It is found in the membrane. Its subcellular location is the cytoplasmic vesicle membrane. Plays a role in the reorganization of the cytoskeleton, endocytosis and cellular vesicle trafficking, both during interphase and at the end of mitotic cell divisions. Required for efficient progress through mitosis and cytokinesis. Required for normal formation of the cleavage furrow at the end of mitosis. Modulates endocytosis of cell-surface proteins. Promotes membrane tubulation (in vitro). May promote the formation of macropinosomes. In Xenopus laevis (African clawed frog), this protein is Sorting nexin-33 (snx33).